The primary structure comprises 137 residues: Phosphoribosyl-AMP cyclohydrolase (137 aa).

Asp83 serves as a coordination point for Mg(2+). Residue Cys84 coordinates Zn(2+). Mg(2+) contacts are provided by Asp85 and Asp87. Zn(2+) is bound by residues Cys101 and Cys108.

Belongs to the PRA-CH family. In terms of assembly, homodimer. Mg(2+) serves as cofactor. Requires Zn(2+) as cofactor.

It localises to the cytoplasm. It catalyses the reaction 1-(5-phospho-beta-D-ribosyl)-5'-AMP + H2O = 1-(5-phospho-beta-D-ribosyl)-5-[(5-phospho-beta-D-ribosylamino)methylideneamino]imidazole-4-carboxamide. The protein operates within amino-acid biosynthesis; L-histidine biosynthesis; L-histidine from 5-phospho-alpha-D-ribose 1-diphosphate: step 3/9. In terms of biological role, catalyzes the hydrolysis of the adenine ring of phosphoribosyl-AMP. The polypeptide is Phosphoribosyl-AMP cyclohydrolase (Burkholderia mallei (strain ATCC 23344)).